Consider the following 870-residue polypeptide: NEDD4-like E3 ubiquitin-protein ligase WWP2 (870 aa).

One can recognise a C2 domain in the interval 1 to 117 (MASASSSRAG…KNNGGKMENM (117 aa)). The disordered stretch occupies residues 151–299 (VPNGSALTDG…QQLPAAAQAP (149 aa)). Polar residues-rich tracts occupy residues 152–171 (PNGS…SSGT) and 200–210 (SARTTPATGEQ). Residue serine 211 is modified to Phosphoserine. Polar residues-rich tracts occupy residues 222–243 (VKNS…TTAT) and 263–272 (VTPNPNTTSL). Over residues 290 to 299 (QQLPAAAQAP) the composition is skewed to low complexity. WW domains follow at residues 300–333 (DALP…RPLP), 330–363 (RPLP…RPTA), 405–437 (GPLP…DPRT), and 444–477 (PALP…DPRP). The 335-residue stretch at 536 to 870 (KPYDLRRRLY…IEETEGFGQE (335 aa)) folds into the HECT domain. Cysteine 838 acts as the Glycyl thioester intermediate in catalysis.

As to quaternary structure, interacts with POU5F1, RBP1, EGR2 and SLC11A2. Interacts with SCNN1A, SCNN1B, SCNN1G, WBP1, WBP2 and ATN1. Interacts with ERBB4, NDFIP1 and NDFIP2. Interacts with ARRDC4. Interacts (via WW domains) with ARRDC1 (via PPxY motifs); ubiquitinates ARRDC1. Interacts (via WW domains) with ARRDC2 and ARRDC3. (Microbial infection) Interacts with adenovirus type 2 PIII. Post-translationally, autoubiquitinated. Ubiquitinated by the SCF(FBXL15) complex, leading to its degradation by the proteasome. In terms of tissue distribution, detected in heart, throughout the brain, placenta, lung, liver, muscle, kidney and pancreas. Also detected in spleen and peripheral blood leukocytes.

The protein resides in the nucleus. It catalyses the reaction S-ubiquitinyl-[E2 ubiquitin-conjugating enzyme]-L-cysteine + [acceptor protein]-L-lysine = [E2 ubiquitin-conjugating enzyme]-L-cysteine + N(6)-ubiquitinyl-[acceptor protein]-L-lysine.. It participates in protein modification; protein ubiquitination. Activated by NDFIP1- and NDFIP2-binding. In terms of biological role, E3 ubiquitin-protein ligase which accepts ubiquitin from an E2 ubiquitin-conjugating enzyme in the form of a thioester and then directly transfers the ubiquitin to targeted substrates. Polyubiquitinates POU5F1 by 'Lys-63'-linked conjugation and promotes it to proteasomal degradation; in embryonic stem cells (ESCs) the ubiquitination is proposed to regulate POU5F1 protein level. Ubiquitinates EGR2 and promotes it to proteasomal degradation; in T-cells the ubiquitination inhibits activation-induced cell death. Ubiquitinates SLC11A2; the ubiquitination is enhanced by presence of NDFIP1 and NDFIP2. Ubiquitinates RPB1 and promotes it to proteasomal degradation. The sequence is that of NEDD4-like E3 ubiquitin-protein ligase WWP2 (WWP2) from Homo sapiens (Human).